The sequence spans 375 residues: Transcription factor E2F4 (375 aa).

Residues 12–81 mediate DNA binding; that stretch reads SRHEKSLGLL…KNSIQWKGVG (70 aa). Positions 39-61 are leucine-zipper; sequence LKAAADTLAVRQKRRIYDITNVL. A DEF box motif is present at residues 44–81; the sequence is DTLAVRQKRRIYDITNVLEGIGLIEKKSKNSIQWKGVG. The interval 82 to 177 is dimerization; that stretch reads PGCNTREIAD…NTNGQKKFQI (96 aa). Positions 197–300 are disordered; the sequence is SSAPVVVPVP…PDPSTSFQPI (104 aa). Positions 220 to 270 are enriched in polar residues; that stretch reads STPQRPALTPQNDIATSPAPTVPHSTISNAESQDCPTGQTFSMENTTSSRL. Residues 280 to 296 are compositionally biased toward low complexity; the sequence is SSASLDNSNDSPDPSTS. Residues 299 to 375 form a transactivation region; it reads PIKSDLSDVL…CDLFDVPINL (77 aa).

Belongs to the E2F/DP family. In terms of assembly, component of the drtf1/e2f transcription factor complex. Component of the EDM complex, at least composed of e2f4, e2f5, mcidas and tfdp1.

It localises to the nucleus. Functionally, transcription activator that binds DNA cooperatively with DP proteins through the E2 recognition site, 5'-TTTC[CG]CGC-3' found in the promoter region of a number of genes. Component of the EDM complex, a complex specifically required for multiciliate cell differentiation: the EDM complex binds and activate genes required for centriole biogenesis. Activates genes required for centriole assembly (plk4, cep152) and genes specifically required for motile cilia formation (foxj1). Also promotes the deuterosome pathway of centriole biogenesis by activating expression of deup1, but not its paralog cep63. This chain is Transcription factor E2F4, found in Xenopus laevis (African clawed frog).